The sequence spans 896 residues: Protein translocase subunit SecA (896 aa).

ATP is bound by residues glutamine 87, 105-109, and aspartate 507; that span reads GEGKT. Residues 853–879 are disordered; it reads ESLSENDEASETQTFRRQEKKIGRNDP. A compositionally biased stretch (basic and acidic residues) spans 866 to 876; it reads TFRRQEKKIGR. 4 residues coordinate Zn(2+): cysteine 880, cysteine 882, cysteine 891, and histidine 892.

It belongs to the SecA family. As to quaternary structure, monomer and homodimer. Part of the essential Sec protein translocation apparatus which comprises SecA, SecYEG and auxiliary proteins SecDF-YajC and YidC. It depends on Zn(2+) as a cofactor.

Its subcellular location is the cell inner membrane. It is found in the cytoplasm. The catalysed reaction is ATP + H2O + cellular proteinSide 1 = ADP + phosphate + cellular proteinSide 2.. Functionally, part of the Sec protein translocase complex. Interacts with the SecYEG preprotein conducting channel. Has a central role in coupling the hydrolysis of ATP to the transfer of proteins into and across the cell membrane, serving both as a receptor for the preprotein-SecB complex and as an ATP-driven molecular motor driving the stepwise translocation of polypeptide chains across the membrane. The polypeptide is Protein translocase subunit SecA (Legionella pneumophila (strain Corby)).